The primary structure comprises 475 residues: Ataxin-10 (475 aa).

R10 bears the Omega-N-methylarginine mark. A phosphoserine mark is found at S12 and S77. Phosphothreonine is present on T82. At S430 the chain carries Phosphoserine.

The protein belongs to the ataxin-10 family. Homooligomer. Interacts with GNB2. Interacts with IQCB1. Interacts with OGT. Post-translationally, polyubiquitinated. In terms of processing, phosphorylation at Ser-12 by AURKB promotes the association of ATXN10 with PLK1. Phosphorylation at Ser-77 and Thr-82 by PLK1 may play a role in the regulation of cytokinesis and may stimulate the proteasome-mediated degradation of ATXN10.

It is found in the cytoplasm. The protein resides in the perinuclear region. The protein localises to the midbody. Its subcellular location is the cytoskeleton. It localises to the cilium basal body. It is found in the microtubule organizing center. The protein resides in the centrosome. The protein localises to the centriole. In terms of biological role, may play a role in the regulation of cytokinesis. May play a role in signaling by stimulating protein glycosylation. Induces neuritogenesis by activating the Ras-MAP kinase pathway and is necessary for the survival of cerebellar neurons. Does not appear to play a major role in ciliogenesis. This is Ataxin-10 (ATXN10) from Macaca fascicularis (Crab-eating macaque).